The sequence spans 217 residues: MAHSIWHEKIKSFLPEHYYGRINHFLDEAYASGLVYPQRENVFKALQVTPLEETKVLILGQDPYHGPKQAQGLSFSVPEEISAPPSLINILKELADDIGPRDHHDLSTWASQGVLLLNACLTVPAGQANGHAGLIWEPFTDAVIKVLNEKDSPVVFILWGAYARKKKAFITNPKHHIIESPHPSPLSSYRGFFGSKPFSRTNAILEKEGMIGIDWLQ.

Asp62 functions as the Proton acceptor in the catalytic mechanism.

This sequence belongs to the uracil-DNA glycosylase (UDG) superfamily. UNG family.

The protein localises to the cytoplasm. The enzyme catalyses Hydrolyzes single-stranded DNA or mismatched double-stranded DNA and polynucleotides, releasing free uracil.. Excises uracil residues from the DNA which can arise as a result of misincorporation of dUMP residues by DNA polymerase or due to deamination of cytosine. This Streptococcus pyogenes serotype M18 (strain MGAS8232) protein is Uracil-DNA glycosylase.